Consider the following 269-residue polypeptide: Type II methyltransferase M2.LlaDCHI (269 aa).

It belongs to the N(4)/N(6)-methyltransferase family.

The enzyme catalyses a 2'-deoxyadenosine in DNA + S-adenosyl-L-methionine = an N(6)-methyl-2'-deoxyadenosine in DNA + S-adenosyl-L-homocysteine + H(+). Its function is as follows. A beta subtype methylase, recognizes the double-stranded sequence 5'-GATC-3', methylates A-2 on both strands, and protects the DNA from cleavage by the LlaDCHI endonuclease. This chain is Type II methyltransferase M2.LlaDCHI, found in Lactococcus lactis subsp. cremoris (Streptococcus cremoris).